Reading from the N-terminus, the 296-residue chain is Homoserine kinase (296 aa).

85 to 95 is a binding site for ATP; that stretch reads PVARGLGSSAA.

This sequence belongs to the GHMP kinase family. Homoserine kinase subfamily.

The protein localises to the cytoplasm. It carries out the reaction L-homoserine + ATP = O-phospho-L-homoserine + ADP + H(+). It participates in amino-acid biosynthesis; L-threonine biosynthesis; L-threonine from L-aspartate: step 4/5. Catalyzes the ATP-dependent phosphorylation of L-homoserine to L-homoserine phosphate. The sequence is that of Homoserine kinase from Moorella thermoacetica (strain ATCC 39073 / JCM 9320).